A 572-amino-acid chain; its full sequence is Sulfate adenylyltransferase (572 aa).

Positions 1–169 (MANAPHGGVL…IEAVNKLNHY (169 aa)) are N-terminal. A catalytic region spans residues 170-393 (DYVALRYTPA…LRESNPPRAT (224 aa)). Sulfate is bound at residue Gln197. ATP-binding positions include 197-200 (QTRN) and 291-294 (GRDH). Catalysis depends on residues Thr198, Arg199, and Asn200. Arg199 provides a ligand contact to sulfate. Ala295 is a sulfate binding site. Val333 is a binding site for ATP. The tract at residues 394–572 (QGFTIFLTGY…LESQGFLERQ (179 aa)) is allosteric regulation domain; adenylyl-sulfate kinase-like. 3'-phosphoadenylyl sulfate is bound by residues 433-436 (DTVR), Arg450, 476-477 (IA), and Arg514.

In the N-terminal section; belongs to the sulfate adenylyltransferase family. It in the C-terminal section; belongs to the APS kinase family. Homohexamer. Dimer of trimers.

It localises to the cytoplasm. The enzyme catalyses sulfate + ATP + H(+) = adenosine 5'-phosphosulfate + diphosphate. Its pathway is sulfur metabolism; hydrogen sulfide biosynthesis; sulfite from sulfate: step 1/3. Allosterically inhibited by 3'-phosphoadenosine 5'-phosphosulfate (PAPS). Catalyzes the first intracellular reaction of sulfate assimilation, forming adenosine-5'-phosphosulfate (APS) from inorganic sulfate and ATP. Plays an important role in sulfate activation as a component of the biosynthesis pathway of sulfur-containing amino acids. This is Sulfate adenylyltransferase from Penicillium chrysogenum (Penicillium notatum).